Here is a 521-residue protein sequence, read N- to C-terminus: GMP synthase [glutamine-hydrolyzing] (521 aa).

The region spanning 5 to 197 (KILILDFGSQ…VLDICGAQPG (193 aa)) is the Glutamine amidotransferase type-1 domain. The active-site Nucleophile is the Cys81. Active-site residues include His171 and Glu173. Positions 198–390 (WTMPNYIEEA…LGLPREMVYR (193 aa)) constitute a GMPS ATP-PPase domain. 225 to 231 (SGGVDSS) is an ATP binding site.

As to quaternary structure, homodimer.

The enzyme catalyses XMP + L-glutamine + ATP + H2O = GMP + L-glutamate + AMP + diphosphate + 2 H(+). The protein operates within purine metabolism; GMP biosynthesis; GMP from XMP (L-Gln route): step 1/1. In terms of biological role, catalyzes the synthesis of GMP from XMP. This chain is GMP synthase [glutamine-hydrolyzing] (guaA), found in Neisseria meningitidis serogroup A / serotype 4A (strain DSM 15465 / Z2491).